The chain runs to 277 residues: Urease accessory protein UreD (277 aa).

It belongs to the UreD family. In terms of assembly, ureD, UreF and UreG form a complex that acts as a GTP-hydrolysis-dependent molecular chaperone, activating the urease apoprotein by helping to assemble the nickel containing metallocenter of UreC. The UreE protein probably delivers the nickel.

It localises to the cytoplasm. In terms of biological role, required for maturation of urease via the functional incorporation of the urease nickel metallocenter. This is Urease accessory protein UreD from Rhodopseudomonas palustris (strain BisB18).